The primary structure comprises 362 residues: Lipoprotein p35 (362 aa).

The first 30 residues, 1 to 30 (MKIKKIKLLKALALTGAFGIVATVPVIVSS), serve as a signal peptide directing secretion. Cys31 carries the N-palmitoyl cysteine lipid modification. A lipid anchor (S-diacylglycerol cysteine) is attached at Cys31. The segment at 33 to 53 (STSENNGNGNGNGGTDGNTQQ) is disordered.

This sequence belongs to the p35 lipoprotein family. Post-translationally, the N-terminus is blocked.

It localises to the cell membrane. Major M.penetrans antigen. This chain is Lipoprotein p35, found in Malacoplasma penetrans (Mycoplasma penetrans).